A 154-amino-acid polypeptide reads, in one-letter code: 20 kDa calcium-binding protein (154 aa).

EF-hand domains lie at 13–48, 49–84, 86–121, and 122–154; these read DQVK…LNLT, VKPD…KLQE, QDER…LGDD, and LTEE…MTSE. 11 residues coordinate Ca(2+): aspartate 62, aspartate 64, threonine 66, aspartate 99, asparagine 101, glutamate 105, aspartate 110, aspartate 135, aspartate 137, serine 139, and glutamate 146.

It is found in the tegument membrane. In terms of biological role, calcium-binding protein. The polypeptide is 20 kDa calcium-binding protein (SM20) (Schistosoma mansoni (Blood fluke)).